Consider the following 341-residue polypeptide: NADH-quinone oxidoreductase subunit H (341 aa).

Helical transmembrane passes span 4–24, 38–58, 70–90, 115–135, 161–181, 187–207, 239–259, 275–295, and 314–334; these read LVNI…LTYF, PSVV…KLLI, ILFI…WAVI, VGVL…IIAG, IGLI…GEMV, MPFW…ISLL, LFFL…TIFF, IPGL…FIWI, and VFLP…LFTG.

Belongs to the complex I subunit 1 family. NDH-1 is composed of 14 different subunits. Subunits NuoA, H, J, K, L, M, N constitute the membrane sector of the complex.

The protein localises to the cell membrane. It catalyses the reaction a quinone + NADH + 5 H(+)(in) = a quinol + NAD(+) + 4 H(+)(out). NDH-1 shuttles electrons from NADH, via FMN and iron-sulfur (Fe-S) centers, to quinones in the respiratory chain. The immediate electron acceptor for the enzyme in this species is believed to be ubiquinone. Couples the redox reaction to proton translocation (for every two electrons transferred, four hydrogen ions are translocated across the cytoplasmic membrane), and thus conserves the redox energy in a proton gradient. This subunit may bind ubiquinone. This Wolbachia pipientis wMel protein is NADH-quinone oxidoreductase subunit H.